The chain runs to 469 residues: MTIRAGSLDRRTLLRGAIATAAMGSFAVACSSPSSEDKESDSGPKGEKSANNPFGAAANSTVEAAIFDGGYGTDYVDYANQVLGSQVKGLKVQVKPVVDIAPQLQPRFVGGNPPDLIDNSGEDQIGFLGILDQLEELDDLFEASTYEGKKIADIVYPGVKDPGTFKDKFVALNYVMTVYGVWYSKTLFEENGWTPPKTWDEALDLGQEAKKKGKYLFVHGKEAATYYRTLLIDSAIKEGGDEVRLALENLEKGCWSHPAVQGVIKVMETMVKQKMFVPGGSGTQFQKAQAIWSNDQKALLYPSGGWIENEMKKATKADFQMTGIPSMTLTDKPALPYEALRAAAGEPFIVPKQGKNPAGGKEVLRAMLSEKAAANFSKTKLAPTIVKGTVPADGYGSTALVSQTKMLEAAGTNIFNYMFVETYGLNTDQLVPWNSFLAGDLDGKGLTSALQKISDKVREDDSVDKVKVS.

Residues Met-1–Asp-37 constitute a signal peptide (tat-type signal). The segment at Cys-30 to Phe-54 is disordered. Positions Ser-35 to Lys-48 are enriched in basic and acidic residues.

It belongs to the bacterial solute-binding protein 1 family. The complex is composed of two ATP-binding proteins (MsiK), two transmembrane proteins (NgcF and NgcG) and a solute-binding protein (NgcE). Post-translationally, predicted to be exported by the Tat system. The position of the signal peptide cleavage has not been experimentally proven.

The protein resides in the cell membrane. Functionally, part of the ABC transporter complex NgcEFG-MsiK involved in N,N'-diacetylchitobiose ((GlcNAc)2) uptake. Binds (GlcNAc)2. Can also bind GlcNAc. The protein is Diacetylchitobiose binding protein NgcE of Streptomyces coelicolor (strain ATCC BAA-471 / A3(2) / M145).